Reading from the N-terminus, the 619-residue chain is Dihydroxy-acid dehydratase (619 aa).

A Mg(2+)-binding site is contributed by Asp81. Residue Cys122 participates in [2Fe-2S] cluster binding. Asp123 and Lys124 together coordinate Mg(2+). At Lys124 the chain carries N6-carboxylysine. Residue Cys198 participates in [2Fe-2S] cluster binding. Glu494 serves as a coordination point for Mg(2+). The Proton acceptor role is filled by Ser520.

Belongs to the IlvD/Edd family. In terms of assembly, homodimer. [2Fe-2S] cluster is required as a cofactor. It depends on Mg(2+) as a cofactor.

The enzyme catalyses (2R)-2,3-dihydroxy-3-methylbutanoate = 3-methyl-2-oxobutanoate + H2O. It catalyses the reaction (2R,3R)-2,3-dihydroxy-3-methylpentanoate = (S)-3-methyl-2-oxopentanoate + H2O. The protein operates within amino-acid biosynthesis; L-isoleucine biosynthesis; L-isoleucine from 2-oxobutanoate: step 3/4. Its pathway is amino-acid biosynthesis; L-valine biosynthesis; L-valine from pyruvate: step 3/4. Functionally, functions in the biosynthesis of branched-chain amino acids. Catalyzes the dehydration of (2R,3R)-2,3-dihydroxy-3-methylpentanoate (2,3-dihydroxy-3-methylvalerate) into 2-oxo-3-methylpentanoate (2-oxo-3-methylvalerate) and of (2R)-2,3-dihydroxy-3-methylbutanoate (2,3-dihydroxyisovalerate) into 2-oxo-3-methylbutanoate (2-oxoisovalerate), the penultimate precursor to L-isoleucine and L-valine, respectively. The polypeptide is Dihydroxy-acid dehydratase (Neisseria gonorrhoeae (strain ATCC 700825 / FA 1090)).